A 307-amino-acid chain; its full sequence is Tyrosine recombinase XerC (307 aa).

The Core-binding (CB) domain occupies histidine 6–methionine 89. A Tyr recombinase domain is found at arginine 110–aspartate 293. Residues arginine 151, lysine 175, histidine 245, arginine 248, and histidine 271 contribute to the active site. Tyrosine 280 functions as the O-(3'-phospho-DNA)-tyrosine intermediate in the catalytic mechanism.

The protein belongs to the 'phage' integrase family. XerC subfamily. Forms a cyclic heterotetrameric complex composed of two molecules of XerC and two molecules of XerD.

The protein localises to the cytoplasm. Functionally, site-specific tyrosine recombinase, which acts by catalyzing the cutting and rejoining of the recombining DNA molecules. The XerC-XerD complex is essential to convert dimers of the bacterial chromosome into monomers to permit their segregation at cell division. It also contributes to the segregational stability of plasmids. This chain is Tyrosine recombinase XerC, found in Alcanivorax borkumensis (strain ATCC 700651 / DSM 11573 / NCIMB 13689 / SK2).